The sequence spans 509 residues: Maturase K (509 aa).

It belongs to the intron maturase 2 family. MatK subfamily.

The protein localises to the plastid. It is found in the chloroplast. Functionally, usually encoded in the trnK tRNA gene intron. Probably assists in splicing its own and other chloroplast group II introns. The sequence is that of Maturase K from Ibicella lutea (Yellow unicorn-plant).